The primary structure comprises 1801 residues: Focadhesin (1801 aa).

Residue K819 is modified to N6-acetyllysine.

Interacts with VCL. In terms of tissue distribution, ubiquitous. High expression in brain followed by testis, muscle, pancreas, heart, ovary, small intestine, placenta, prostate, thymus, kidney, colon, liver, lung, spleen and leukocytes. Expression is reduced in most glioblastomas and all glioblastoma cell lines.

It is found in the cell junction. It localises to the focal adhesion. The protein localises to the cytoplasm. Its subcellular location is the cytosol. Its function is as follows. Required for the maintenance of SKIC2 and SKIC3 proteostatic levels in the liver. May be involved in the regulation of RNA degradation by the exosome complex. Potential tumor suppressor in gliomas. The protein is Focadhesin of Homo sapiens (Human).